A 489-amino-acid polypeptide reads, in one-letter code: MDFAVSNRPLEKSKADALVVLLGKKNDLPQALPSATREQISQFTKAGDFNASKGQLVWLHAPQDLNADRLLLVGTGDSPLSDQGWLSLVHKATKTLASSPVKQAMWLLDDTHTQTLEWQVREGSRVVEESTYRFDNYRSKPAPASNLAKLTFWHAEKDTTLTKAHKTGKAVGLGVNVARDLGNLPPNDCYPEYLSGVARDLGKEYEKLTVKVLSQAQAEKMGMGAFHAVAKGSERQGQIIVMEYKGAKPTKQGPVALVGKGITFDTGGISLKPGATMDEMKYDMGGAASVFGSVKTVCELDLPIHLVAVVAAAENMPDGRAARPGDIVKTLSGQTVEILNTDAEGRLVLCDALTYVQQKHKPHTVIDIATLTGACVVALGAHAQAVYSNDDDLSEALLAAGKETGDRGWPMPLWDEYQGQLDSPFADMQNIGGPKAGSITAACFLSRFTKEVKWAHLDIAGTAWISGGMSKGATGRPVPMLTRYLMDNA.

Lys-260 and Asp-265 together coordinate Mn(2+). Lys-272 is a catalytic residue. Positions 283, 342, and 344 each coordinate Mn(2+). Residue Arg-346 is part of the active site.

It belongs to the peptidase M17 family. The cofactor is Mn(2+).

Its subcellular location is the cytoplasm. The enzyme catalyses Release of an N-terminal amino acid, Xaa-|-Yaa-, in which Xaa is preferably Leu, but may be other amino acids including Pro although not Arg or Lys, and Yaa may be Pro. Amino acid amides and methyl esters are also readily hydrolyzed, but rates on arylamides are exceedingly low.. It catalyses the reaction Release of an N-terminal amino acid, preferentially leucine, but not glutamic or aspartic acids.. Its function is as follows. Presumably involved in the processing and regular turnover of intracellular proteins. Catalyzes the removal of unsubstituted N-terminal amino acids from various peptides. This Alcanivorax borkumensis (strain ATCC 700651 / DSM 11573 / NCIMB 13689 / SK2) protein is Probable cytosol aminopeptidase.